The sequence spans 357 residues: tRNA pseudouridine synthase B (357 aa).

Asp-42 serves as the catalytic Nucleophile.

It belongs to the pseudouridine synthase TruB family. Type 1 subfamily.

It carries out the reaction uridine(55) in tRNA = pseudouridine(55) in tRNA. Responsible for synthesis of pseudouridine from uracil-55 in the psi GC loop of transfer RNAs. This is tRNA pseudouridine synthase B from Treponema denticola (strain ATCC 35405 / DSM 14222 / CIP 103919 / JCM 8153 / KCTC 15104).